The chain runs to 198 residues: ATP-dependent Clp protease proteolytic subunit 2 (198 aa).

The active-site Nucleophile is the S94. H119 is a catalytic residue.

The protein belongs to the peptidase S14 family. Fourteen ClpP subunits assemble into 2 heptameric rings which stack back to back to give a disk-like structure with a central cavity, resembling the structure of eukaryotic proteasomes.

The protein resides in the cytoplasm. The catalysed reaction is Hydrolysis of proteins to small peptides in the presence of ATP and magnesium. alpha-casein is the usual test substrate. In the absence of ATP, only oligopeptides shorter than five residues are hydrolyzed (such as succinyl-Leu-Tyr-|-NHMec, and Leu-Tyr-Leu-|-Tyr-Trp, in which cleavage of the -Tyr-|-Leu- and -Tyr-|-Trp bonds also occurs).. In terms of biological role, cleaves peptides in various proteins in a process that requires ATP hydrolysis. Has a chymotrypsin-like activity. Plays a major role in the degradation of misfolded proteins. In Borreliella burgdorferi (strain ATCC 35210 / DSM 4680 / CIP 102532 / B31) (Borrelia burgdorferi), this protein is ATP-dependent Clp protease proteolytic subunit 2.